Consider the following 118-residue polypeptide: MVTCLTTFAVLLLTAAVASAAEAAAPGGESYVKAIFAVGAMIGAGIAIGVGAVGAGLGIGTAASGACQAVGRNPGVQGKIMMTMLVGMAMAESIAIYALVVSLVLIFANPYTKFFFVG.

2 helical membrane-spanning segments follow: residues 34–54 (AIFA…GAVG) and 88–108 (MAMA…LIFA).

The protein belongs to the ATPase C chain family. F-type ATPases have 2 components, F(1) - the catalytic core - and F(0) - the membrane proton channel. F(1) has five subunits: alpha(3), beta(3), gamma(1), delta(1), epsilon(1). F(0) has three main subunits: a(1), b(2) and c(10-14). The alpha and beta chains form an alternating ring which encloses part of the gamma chain. F(1) is attached to F(0) by a central stalk formed by the gamma and epsilon chains, while a peripheral stalk is formed by the delta and b chains.

The protein localises to the cell inner membrane. Its function is as follows. F(1)F(0) ATP synthase produces ATP from ADP in the presence of a proton or sodium gradient. F-type ATPases consist of two structural domains, F(1) containing the extramembraneous catalytic core and F(0) containing the membrane proton channel, linked together by a central stalk and a peripheral stalk. During catalysis, ATP synthesis in the catalytic domain of F(1) is coupled via a rotary mechanism of the central stalk subunits to proton translocation. Functionally, key component of the F(0) channel; it plays a direct role in translocation across the membrane. A homomeric c-ring of between 10-14 subunits forms the central stalk rotor element with the F(1) delta and epsilon subunits. The chain is ATP synthase subunit c from Syntrophus aciditrophicus (strain SB).